The primary structure comprises 348 residues: Glycerol-1-phosphate dehydrogenase [NAD(P)+] (348 aa).

NAD(+) contacts are provided by residues G94–D98 and T116. D121 serves as a coordination point for substrate. Position 125 (S125) interacts with NAD(+). D168 lines the substrate pocket. Zn(2+) is bound by residues D168 and H248. H252 lines the substrate pocket. Residue H264 coordinates Zn(2+).

This sequence belongs to the glycerol-1-phosphate dehydrogenase family. As to quaternary structure, homooctamer. It depends on Zn(2+) as a cofactor.

It localises to the cytoplasm. It carries out the reaction sn-glycerol 1-phosphate + NAD(+) = dihydroxyacetone phosphate + NADH + H(+). The enzyme catalyses sn-glycerol 1-phosphate + NADP(+) = dihydroxyacetone phosphate + NADPH + H(+). The protein operates within membrane lipid metabolism; glycerophospholipid metabolism. Its function is as follows. Catalyzes the NAD(P)H-dependent reduction of dihydroxyacetonephosphate (DHAP or glycerone phosphate) to glycerol 1-phosphate (G1P). The G1P thus generated is used as the glycerophosphate backbone of phospholipids in the cellular membranes of Archaea. This chain is Glycerol-1-phosphate dehydrogenase [NAD(P)+], found in Methanosphaera stadtmanae (strain ATCC 43021 / DSM 3091 / JCM 11832 / MCB-3).